The sequence spans 179 residues: Gamma-glutamyl cyclotransferase verK (179 aa).

The protein belongs to the class-I pyridoxal-phosphate-dependent aminotransferase family.

It carries out the reaction an alpha-(gamma-L-glutamyl)-L-amino acid = 5-oxo-L-proline + an L-alpha-amino acid. The protein operates within mycotoxin biosynthesis. Its function is as follows. Gamma-glutamyl cyclotransferase; part of the gene cluster that mediates the biosynthesis of 11'-deoxyverticillin A, one of the dimeric epipolythiodioxopiperazines (ETPs) from the verticillin family that act as mycotoxins. 11'-deoxyverticillin A is required for normal conidiation. The nonribosomal peptide synthetase verP is speculated to be responsible for condensation of amino acids to form the carbon skeleton of verticillin, whereas the cluster-specific tailoring enzymes are involved in further modifications leading to the production of 11'-deoxyverticillin A. This is Gamma-glutamyl cyclotransferase verK from Clonostachys rogersoniana.